Consider the following 814-residue polypeptide: Putative serine/threonine-protein kinase-like protein CCR3 (814 aa).

An N-terminal signal peptide occupies residues 1–30 (MKRFINSTVTFSVTVTIAVIIFFLLSPVTS). N-linked (GlcNAc...) asparagine glycans are attached at residues N6, N68, N136, N215, N226, N251, N260, N275, N299, and N309. Residues 31–393 (LGSGSTYAVV…SSPPSKALTR (363 aa)) lie on the Extracellular side of the membrane. Positions 366-381 (SQFPLPPPPPPPPPSP) are enriched in pro residues. The disordered stretch occupies residues 366 to 388 (SQFPLPPPPPPPPPSPSTSSPPS). A helical membrane pass occupies residues 394-414 (GLLAFAIVGSVGAFAGICSVV). Residues 415–814 (YCLWTGVCLG…SSGICSIVSD (400 aa)) are Cytoplasmic-facing. The segment at 433–478 (QPTITRGGSNSRSNSSNSRSLSIRRQGSRMLSMRRQRSGTSSMKHA) is disordered. A compositionally biased stretch (low complexity) spans 441 to 457 (SNSRSNSSNSRSLSIRR). One can recognise a Protein kinase domain in the interval 496–794 (FSLENKIGSG…DIVGNLERAL (299 aa)). ATP is bound by residues 502 to 510 (IGSGSFGVV) and K524. The active-site Proton acceptor is D631.

It belongs to the protein kinase superfamily. Ser/Thr protein kinase family. Homodimer. As to expression, expressed in roots, leaves, shoot apical meristems (SAM), and floral buds.

The protein resides in the membrane. The catalysed reaction is L-seryl-[protein] + ATP = O-phospho-L-seryl-[protein] + ADP + H(+). It catalyses the reaction L-threonyl-[protein] + ATP = O-phospho-L-threonyl-[protein] + ADP + H(+). Functionally, serine/threonine-protein kinase. The chain is Putative serine/threonine-protein kinase-like protein CCR3 (CCR3) from Arabidopsis thaliana (Mouse-ear cress).